The primary structure comprises 437 residues: Histidinol dehydrogenase (437 aa).

NAD(+) contacts are provided by Tyr-137, Gln-199, and Asn-222. Substrate-binding residues include Ser-245, Gln-267, and His-270. 2 residues coordinate Zn(2+): Gln-267 and His-270. Catalysis depends on proton acceptor residues Glu-335 and His-336. His-336, Asp-369, Glu-423, and His-428 together coordinate substrate. Residue Asp-369 coordinates Zn(2+). His-428 lines the Zn(2+) pocket.

Belongs to the histidinol dehydrogenase family. Requires Zn(2+) as cofactor.

The enzyme catalyses L-histidinol + 2 NAD(+) + H2O = L-histidine + 2 NADH + 3 H(+). Its pathway is amino-acid biosynthesis; L-histidine biosynthesis; L-histidine from 5-phospho-alpha-D-ribose 1-diphosphate: step 9/9. In terms of biological role, catalyzes the sequential NAD-dependent oxidations of L-histidinol to L-histidinaldehyde and then to L-histidine. The chain is Histidinol dehydrogenase from Parasynechococcus marenigrum (strain WH8102).